We begin with the raw amino-acid sequence, 203 residues long: Guanylate kinase (203 aa).

A Guanylate kinase-like domain is found at 4-183 (GKLFVISAPS…ASTLLKSIIW (180 aa)). An ATP-binding site is contributed by 11-18 (APSGAGKT).

The protein belongs to the guanylate kinase family.

It is found in the cytoplasm. The catalysed reaction is GMP + ATP = GDP + ADP. Functionally, essential for recycling GMP and indirectly, cGMP. The protein is Guanylate kinase of Desulfotalea psychrophila (strain LSv54 / DSM 12343).